The primary structure comprises 97 residues: Citrate lyase acyl carrier protein (97 aa).

Ser-14 carries the post-translational modification O-(phosphoribosyl dephospho-coenzyme A)serine.

It belongs to the CitD family. Oligomer with a subunit composition of (alpha,beta,gamma)6.

It localises to the cytoplasm. Covalent carrier of the coenzyme of citrate lyase. This chain is Citrate lyase acyl carrier protein, found in Rhodopseudomonas palustris (strain BisA53).